A 347-amino-acid chain; its full sequence is uncharacterized protein (347 aa).

This is an uncharacterized protein from Magallana gigas (Pacific oyster).